Consider the following 381-residue polypeptide: UDP-N-acetylglucosamine--N-acetylmuramyl-(pentapeptide) pyrophosphoryl-undecaprenol N-acetylglucosamine transferase (381 aa).

Residues 10–12, N124, R165, S190, I245, and Q290 each bind UDP-N-acetyl-alpha-D-glucosamine; that span reads TGG. The tract at residues 361 to 381 is disordered; sequence WGSPAGQERPGHGPVRPPDLA.

The protein belongs to the glycosyltransferase 28 family. MurG subfamily.

Its subcellular location is the cell inner membrane. It carries out the reaction di-trans,octa-cis-undecaprenyl diphospho-N-acetyl-alpha-D-muramoyl-L-alanyl-D-glutamyl-meso-2,6-diaminopimeloyl-D-alanyl-D-alanine + UDP-N-acetyl-alpha-D-glucosamine = di-trans,octa-cis-undecaprenyl diphospho-[N-acetyl-alpha-D-glucosaminyl-(1-&gt;4)]-N-acetyl-alpha-D-muramoyl-L-alanyl-D-glutamyl-meso-2,6-diaminopimeloyl-D-alanyl-D-alanine + UDP + H(+). It functions in the pathway cell wall biogenesis; peptidoglycan biosynthesis. Its function is as follows. Cell wall formation. Catalyzes the transfer of a GlcNAc subunit on undecaprenyl-pyrophosphoryl-MurNAc-pentapeptide (lipid intermediate I) to form undecaprenyl-pyrophosphoryl-MurNAc-(pentapeptide)GlcNAc (lipid intermediate II). This chain is UDP-N-acetylglucosamine--N-acetylmuramyl-(pentapeptide) pyrophosphoryl-undecaprenol N-acetylglucosamine transferase, found in Anaeromyxobacter sp. (strain Fw109-5).